Consider the following 312-residue polypeptide: Ribosomal protein L11 methyltransferase (312 aa).

Residues Thr160, Gly181, Asp203, and Asn246 each contribute to the S-adenosyl-L-methionine site.

This sequence belongs to the methyltransferase superfamily. PrmA family.

Its subcellular location is the cytoplasm. The catalysed reaction is L-lysyl-[protein] + 3 S-adenosyl-L-methionine = N(6),N(6),N(6)-trimethyl-L-lysyl-[protein] + 3 S-adenosyl-L-homocysteine + 3 H(+). Functionally, methylates ribosomal protein L11. In Staphylococcus aureus (strain MRSA252), this protein is Ribosomal protein L11 methyltransferase.